Here is a 459-residue protein sequence, read N- to C-terminus: Probable Delta(5) fatty acid desaturase C (459 aa).

The Cytochrome b5 heme-binding domain maps to 9-87; that stretch reads KKLYSWKEIS…LKQYEIGQVS (79 aa). Positions 45 and 68 each coordinate heme. A run of 2 helical transmembrane segments spans residues 121–141 and 151–171; these read FAFG…TSYY and FYLN…FSLH. The short motif at 174–178 is the Histidine box-1 element; the sequence is HDACH. Residues 187–207 traverse the membrane as a helical segment; that stretch reads VWKWLGATYDLFIGASFFYWC. Positions 210-215 match the Histidine box-2 motif; the sequence is HVIGHH. 2 helical membrane-spanning segments follow: residues 289–309 and 315–335; these read FEII…FIIP and LVNL…YLSF. Positions 394–398 match the Histidine box-3 motif; it reads QVVHH.

It belongs to the fatty acid desaturase type 1 family. The cofactor is Fe cation.

It is found in the membrane. This chain is Probable Delta(5) fatty acid desaturase C, found in Dictyostelium discoideum (Social amoeba).